The sequence spans 142 residues: Large ribosomal subunit protein uL13 (142 aa).

The protein belongs to the universal ribosomal protein uL13 family. Part of the 50S ribosomal subunit.

This protein is one of the early assembly proteins of the 50S ribosomal subunit, although it is not seen to bind rRNA by itself. It is important during the early stages of 50S assembly. The polypeptide is Large ribosomal subunit protein uL13 (Burkholderia cenocepacia (strain ATCC BAA-245 / DSM 16553 / LMG 16656 / NCTC 13227 / J2315 / CF5610) (Burkholderia cepacia (strain J2315))).